Reading from the N-terminus, the 1040-residue chain is MPVKPSAQNNSPSKPTSKSVPVDSDSLVIGDAIYHLADHTPMMVQYLNMKVNYPQALLLYRMGDFYELFFEDAKRAAQILDITLTRRGTDKAGNTIAMAGVPFHAADSYMARLIAAGQTVVVCEQIDESATGTDNANNPSNAPTMGDKQKKDKSKSTAGTIMRREVVKTLTAGTITDDALIAPNHTPTVVAIDIETPKSNSKQPVQAAVSQMDLAAGTLTTQTISANQDDIESLQTQMLTVLARFAPSECIISEALSDSNGDISEEWLLWLRQHLNCPIIEVAANDFHREHASATLCQQFEVQRLDGLGISGAPLAQSSCAALIHYARQTQQRHVPQLNQLIVEYNDDYLIIDANSQQNLELFTPVSSNGTSLISVLNHCQTPMGRRLLVQQMKRPLRQHSRINLRLDAITSLLDTDKQSEQCSGNISLVTSLRETLNAIGDIERISSRIGLMSAKPRDLRKLADGIASSAQLTTLLTNAGISHEQAGLLPMLMQQLPAQLPAVQSVAELIERAIIVEPPAHIRDGGMLAAGYDAEFDRLTHLHDNIQVTLDEMVERARQESQLPSLKVGFNKVSGFYFELPKMQAKNAPAHFIRRQTLKSSERFITNELKTVETEYLSAQSLALTREKQLYNELLIRLGSHLAELQQLSAAIAQIDVLNNWAQLAITYNWQRPVMSNESKKSSILDNSLENSHSENGLNNNSQTSINIKEGRHVVVEAVLNPIHTHQNNPAKHSSHFVANDCVLGSYENPERLLMITGPNMGGKSTYMRQTALIVLLAHCGSFVPAARAHIGDIDRIFTRIGSADDLAGGKSTFMVEMIETANILNQATNKSLVLMDEVGRGTATTDGLAIAHACVNRLVEIGCLTLFATHYFELTKLAQNPKESSGSNDKFIRNVHVAASEIDGQLLLLHQIKDGAASSSFGLHVAKMAGIPIQVLNDAKRYLVDNLSIDNLKPDNESIDDDKNELAKSVKDKRQQTYDSNIEKSNIRNLDKKQKNIDIPQQNQLFSLQDELQAIDPDSLTPKQAHDLLYHLKEIISY.

The segment covering 1 to 10 (MPVKPSAQNN) has biased composition (polar residues). 2 disordered regions span residues 1-22 (MPVKPSAQNNSPSKPTSKSVPV) and 130-157 (ATGTDNANNPSNAPTMGDKQKKDKSKST). Residues 11–22 (SPSKPTSKSVPV) are compositionally biased toward low complexity. Residues 130 to 143 (ATGTDNANNPSNAP) show a composition bias toward polar residues. 759–766 (GPNMGGKS) contributes to the ATP binding site.

It belongs to the DNA mismatch repair MutS family.

This protein is involved in the repair of mismatches in DNA. It is possible that it carries out the mismatch recognition step. This protein has a weak ATPase activity. The protein is DNA mismatch repair protein MutS of Psychrobacter cryohalolentis (strain ATCC BAA-1226 / DSM 17306 / VKM B-2378 / K5).